Consider the following 172-residue polypeptide: Translation initiation factor IF-3 (172 aa).

Belongs to the IF-3 family. In terms of assembly, monomer.

It localises to the cytoplasm. Its function is as follows. IF-3 binds to the 30S ribosomal subunit and shifts the equilibrium between 70S ribosomes and their 50S and 30S subunits in favor of the free subunits, thus enhancing the availability of 30S subunits on which protein synthesis initiation begins. The chain is Translation initiation factor IF-3 from Lactobacillus johnsonii (strain CNCM I-12250 / La1 / NCC 533).